The primary structure comprises 495 residues: MASITNHKSDPLHFVLFPFMAQGHMIPMVDIARLLAQRGLTITIVTTPHNASRFKNVLNRAIESGLPINILHVKLPYQEVGLPEGLENIDCFDSMEHMIPFFKGVNMVEESVQKLFEEMSPRPSCIISDFCLPYTSKVAKKFNIPKILFHGMCCLCLLCMHVLRKNPKILENLKSDKEHFVVPYFPDKIELTRPQVPMDTYVPGELKEFMEDLVEADKTSYGVIVNTFQELEPAYVKDYKETRSGKAWSVGPVALCNKARIDKAERGNKSDIDQDECLKWLDSKEERSVLYVCLGSICNLPLAQLKELGLGLEESTRPFIWVIRGWDKNKQLVEWFSESGFEERIKDRGLLIKGWSPQMLILSHQSVGGFLTHCGWNSTLEGITAGLPLLTWPLFADQFCNEKLVVQVLNSGVRAGVEQPMKWGEEEKIGVLVDKEGVKKAVEELMGESDEANERRRRAKELGELAHKAVEEGGSSHSNITFLLQDIMQLAQSNN.

A UDP-alpha-D-glucose-binding site is contributed by 23-26 (GHMI). Histidine 24 serves as the catalytic Proton acceptor. Catalysis depends on aspartate 129, which acts as the Charge relay. UDP-alpha-D-glucose is bound by residues 355-358 (WSPQ), 373-381 (HCGWNSTLE), and 397-398 (DQ).

This sequence belongs to the UDP-glycosyltransferase family.

Its function is as follows. Catalyzes the transfer of a glucose (Glc) moiety from UDP-Glc to the C-28 carboxylic group of oleanolate 3-O-beta-D-glucoside to form oleanolate 3,28-O-beta-D-diglucoside. In Barbarea vulgaris (Yellow rocket), this protein is UDP-glycosyltransferase 73C25.